The following is a 1005-amino-acid chain: Ephrin type-A receptor 8 (1005 aa).

Residues 1-27 (MAPARGRLPPALWVVTAAAAAATCVSA) form the signal peptide. The Extracellular portion of the chain corresponds to 28 to 542 (ARGEVNLLDT…KPRPRYDTRT (515 aa)). The Eph LBD domain maps to 31-209 (EVNLLDTSTI…YYKKCPAMVR (179 aa)). Fibronectin type-III domains are found at residues 328 to 438 (PPSA…TNQA) and 439 to 534 (APSQ…TGKP). N-linked (GlcNAc...) asparagine glycosylation is found at N340, N407, and N432. A helical transmembrane segment spans residues 543–563 (IVWICLTLITGLVVLLLLLIC). Residues 564-570 (KKRHCGY) form a mediates interaction with ANKS1A and ANKS1B region. At 564–1005 (KKRHCGYSKA…TSTQGPRRHL (442 aa)) the chain is on the cytoplasmic side. Residues 589-644 (APPPVFLPLHHPPGKLPEPQFYAEPHTYEEPGRAGRSFTREIEASRIHIEKIIGSG) are mediates interaction with PIK3CG and required for endocytosis. Y616 carries the phosphotyrosine; by autocatalysis modification. The Protein kinase domain maps to 635-896 (IHIEKIIGSG…QIVSVLDALI (262 aa)). ATP is bound by residues 641 to 649 (IGSGDSGEV) and K667. The Proton acceptor role is filled by D760. A Phosphotyrosine; by autocatalysis modification is found at Y839. In terms of domain architecture, SAM spans 930–994 (GGGLTVGDWL…LGSIQTMRAQ (65 aa)). The short motif at 1003–1005 (RHL) is the PDZ-binding element.

This sequence belongs to the protein kinase superfamily. Tyr protein kinase family. Ephrin receptor subfamily. As to quaternary structure, heterotetramer upon binding of the ligand. The heterotetramer is composed of an ephrin dimer and a receptor dimer. Oligomerization is probably required to induce biological responses. May also form heterodimers with other ephrin receptors. Interacts with FYN; possible downstream effector of EPHA8 in regulation of cell adhesion. Interacts with PIK3CG; regulates integrin-mediated cell adhesion to substrate. Interacts with TIAM1; regulates clathrin-mediated endocytosis of EPHA8. Interacts with ANKS1A and ANKS1B; EPHA8 kinase activity-independent but stimulated by EPHA8 ubiquitination. In terms of processing, phosphorylated. Phosphorylation is stimulated upon binding of its ligands including EFNA2, EFNA3 and EFNA5. Autophosphorylation on Tyr-616 is critical for association with FYN. Autophosphorylation on Tyr-839 modulates tyrosine kinase activity. Post-translationally, ubiquitinated. Ubiquitination by CBL regulates the receptor stability and activity through proteasomal degradation. ANKS1A prevents ubiquitination and degradation.

The protein resides in the cell membrane. Its subcellular location is the cell projection. The protein localises to the early endosome membrane. The catalysed reaction is L-tyrosyl-[protein] + ATP = O-phospho-L-tyrosyl-[protein] + ADP + H(+). Functionally, receptor tyrosine kinase which binds promiscuously GPI-anchored ephrin-A family ligands residing on adjacent cells, leading to contact-dependent bidirectional signaling into neighboring cells. The signaling pathway downstream of the receptor is referred to as forward signaling while the signaling pathway downstream of the ephrin ligand is referred to as reverse signaling. The GPI-anchored ephrin-A EFNA2, EFNA3, and EFNA5 are able to activate EPHA8 through phosphorylation. With EFNA5 may regulate integrin-mediated cell adhesion and migration on fibronectin substrate but also neurite outgrowth. During development of the nervous system also plays a role in axon guidance. Downstream effectors of the EPHA8 signaling pathway include FYN which promotes cell adhesion upon activation by EPHA8 and the MAP kinases in the stimulation of neurite outgrowth. This is Ephrin type-A receptor 8 (EPHA8) from Homo sapiens (Human).